The following is a 150-amino-acid chain: MKPSDWLILQKKVRFGDCDSAGVIHFHNLLKWSHEAWEESIEIYGIPYQDIFPDFSIRKSQIIFPIVNCEANYLAPIKIGDLLKVKIYPHKINPHLFRVNSFFMKNGNKVAEGKIIHCSLDVDSRNKIELPDQLERWIEASNISTNLKEC.

Asp-19 is an active-site residue.

Belongs to the 4-hydroxybenzoyl-CoA thioesterase family. DHNA-CoA hydrolase subfamily.

It catalyses the reaction 1,4-dihydroxy-2-naphthoyl-CoA + H2O = 1,4-dihydroxy-2-naphthoate + CoA + H(+). It functions in the pathway cofactor biosynthesis; phylloquinone biosynthesis. The protein operates within quinol/quinone metabolism; 1,4-dihydroxy-2-naphthoate biosynthesis; 1,4-dihydroxy-2-naphthoate from chorismate: step 7/7. Functionally, catalyzes the hydrolysis of 1,4-dihydroxy-2-naphthoyl-CoA (DHNA-CoA) to 1,4-dihydroxy-2-naphthoate (DHNA), a reaction involved in phylloquinone (vitamin K1) biosynthesis. The sequence is that of 1,4-dihydroxy-2-naphthoyl-CoA hydrolase from Prochlorococcus marinus (strain MIT 9312).